Consider the following 577-residue polypeptide: Arginine--tRNA ligase (577 aa).

A 'HIGH' region motif is present at residues 122 to 132 (PNVAKEMHVGH).

Belongs to the class-I aminoacyl-tRNA synthetase family. As to quaternary structure, monomer.

The protein resides in the cytoplasm. It catalyses the reaction tRNA(Arg) + L-arginine + ATP = L-arginyl-tRNA(Arg) + AMP + diphosphate. The sequence is that of Arginine--tRNA ligase from Escherichia coli O6:K15:H31 (strain 536 / UPEC).